Here is a 612-residue protein sequence, read N- to C-terminus: UvrABC system protein C (612 aa).

The GIY-YIG domain maps to 18–96 (TRPGVYRMMD…IKTLKPPYNI (79 aa)). Residues 208-243 (PEIINETIQQMEVASAQLDFERAAVLRDQVDYLRRV) form the UVR domain.

This sequence belongs to the UvrC family. In terms of assembly, interacts with UvrB in an incision complex.

It localises to the cytoplasm. The UvrABC repair system catalyzes the recognition and processing of DNA lesions. UvrC both incises the 5' and 3' sides of the lesion. The N-terminal half is responsible for the 3' incision and the C-terminal half is responsible for the 5' incision. This chain is UvrABC system protein C, found in Hahella chejuensis (strain KCTC 2396).